Consider the following 344-residue polypeptide: Arginine N-succinyltransferase (344 aa).

Leu125 serves as a coordination point for succinyl-CoA. His229 serves as the catalytic Proton donor.

It belongs to the arginine N-succinyltransferase family.

It carries out the reaction succinyl-CoA + L-arginine = N(2)-succinyl-L-arginine + CoA + H(+). Its pathway is amino-acid degradation; L-arginine degradation via AST pathway; L-glutamate and succinate from L-arginine: step 1/5. Its function is as follows. Catalyzes the transfer of succinyl-CoA to arginine to produce N(2)-succinylarginine. The chain is Arginine N-succinyltransferase from Shigella boydii serotype 4 (strain Sb227).